The following is a 426-amino-acid chain: Hemojuvelin (426 aa).

An N-terminal signal peptide occupies residues 1 to 35 (MGEPGQSPSPRSSHGSPPTLSTLTLLLLLCGHAHS). The residue at position 46 (tyrosine 46) is a Phosphotyrosine. Residue asparagine 118 is glycosylated (N-linked (GlcNAc...) asparagine). Residues 119-142 (CSRQGPTAPPPPRGPALPGAGSGL) are disordered. Cystine bridges form between cysteine 148–cysteine 230 and cysteine 167–cysteine 317. Residues asparagine 213 and asparagine 372 are each glycosylated (N-linked (GlcNAc...) asparagine). A lipid anchor (GPI-anchor amidated aspartate) is attached at aspartate 400. A propeptide spans 401–426 (AGVPLSSATLLAPLLSGLFVLWLCIQ) (removed in mature form).

This sequence belongs to the repulsive guidance molecule (RGM) family. Interacts with BMP2 and BMP4. Interacts with BMP6. Interacts with BMPR1B. Interacts with TMPRSS6. In terms of processing, autocatalytically cleaved at low pH; the two chains remain linked via two disulfide bonds. Also proteolytically processed by TMPRSS6, several fragments being released in the extracellular space; regulates HJV activity in BMP signaling and thefore iron homeostasis. In terms of tissue distribution, adult and fetal liver, heart, and skeletal muscle.

It localises to the cell membrane. Its function is as follows. Acts as a bone morphogenetic protein (BMP) coreceptor. Through enhancement of BMP signaling regulates hepcidin (HAMP) expression and regulates iron homeostasis. This chain is Hemojuvelin, found in Homo sapiens (Human).